Consider the following 115-residue polypeptide: Cell division topological specificity factor (115 aa).

The disordered stretch occupies residues 93-115; it reads QLKEPKNQSELDSPETEGTDQKS. Positions 104 to 115 are enriched in acidic residues; it reads DSPETEGTDQKS.

This sequence belongs to the MinE family.

Its function is as follows. Prevents the cell division inhibition by proteins MinC and MinD at internal division sites while permitting inhibition at polar sites. This ensures cell division at the proper site by restricting the formation of a division septum at the midpoint of the long axis of the cell. This chain is Cell division topological specificity factor, found in Prochlorococcus marinus (strain NATL1A).